Consider the following 424-residue polypeptide: Tubulin gamma chain, nucleomorph (424 aa).

137–143 (NGGTGAG) contacts GTP.

The protein belongs to the tubulin family.

Its function is as follows. Tubulin is the major constituent of microtubules. The gamma chain is found at microtubule organizing centers (MTOC) such as the spindle poles or the centrosome, suggesting that it is involved in the minus-end nucleation of microtubule assembly. In Guillardia theta (Cryptophyte), this protein is Tubulin gamma chain, nucleomorph (tubG).